The chain runs to 862 residues: Probable glutaminase ARB_05535/05536 (862 aa).

The N-terminal stretch at Met1–Ala19 is a signal peptide. 7 N-linked (GlcNAc...) asparagine glycosylation sites follow: Asn106, Asn273, Asn436, Asn448, Asn486, Asn610, and Asn744. Positions Phe798–Asp862 are disordered. Residues Ser853–Asp862 are compositionally biased toward polar residues.

It belongs to the fungal glutaminase gtaA family.

Its subcellular location is the secreted. The enzyme catalyses L-glutamine + H2O = L-glutamate + NH4(+). Functionally, glutaminase catalyzes the hydrolysis of glutamine to glutamic acid and plays a key role in nitrogen metabolism. The protein is Probable glutaminase ARB_05535/05536 of Arthroderma benhamiae (strain ATCC MYA-4681 / CBS 112371) (Trichophyton mentagrophytes).